We begin with the raw amino-acid sequence, 320 residues long: Olfactory receptor 5C1 (320 aa).

At 1–29 (MNSENLTRAAVAPAEFVLLGITNRWDLRV) the chain is on the extracellular side. Residue Asn5 is glycosylated (N-linked (GlcNAc...) asparagine). A helical membrane pass occupies residues 30–50 (ALFLTCLPVYLVSLLGNMGMA). At 51-58 (LLIRMDAR) the chain is on the cytoplasmic side. Residues 59 to 79 (LHTPMYFFLANLSLLDACYSS) traverse the membrane as a helical segment. Over 80–103 (AIGPKMLVDLLLPRATIPYTACAL) the chain is Extracellular. The cysteines at positions 101 and 193 are disulfide-linked. Residues 104-124 (QMFVFAGLADTECCLLAAMAY) form a helical membrane-spanning segment. The Cytoplasmic segment spans residues 125-143 (DRYVAIRNPLLYTTAMSQR). The helical transmembrane segment at 144–164 (LCLALLGASGLGGAVSAFVHT) threads the bilayer. Topologically, residues 165-200 (TLTFRLSFCRSRKINSFFCDIPPLLAISCSDTSLNE) are extracellular. Residues 201 to 221 (LLLFAICGFIQTATVLAITVS) form a helical membrane-spanning segment. Residues 222–241 (YGFIAGAVIHMRSVEGSRRA) lie on the Cytoplasmic side of the membrane. A helical membrane pass occupies residues 242 to 262 (ASTGGSHLTAVAMMYGTLIFM). At 263–275 (YLRPSSSYALDTD) the chain is on the extracellular side. The helical transmembrane segment at 276-296 (KMASVFYTLVIPSLNPLIYSL) threads the bilayer. At 297 to 320 (RNKEVKEALRQTWSRFHCPGQGSQ) the chain is on the cytoplasmic side.

This sequence belongs to the G-protein coupled receptor 1 family.

It localises to the cell membrane. In terms of biological role, odorant receptor. The sequence is that of Olfactory receptor 5C1 (OR5C1) from Homo sapiens (Human).